The sequence spans 404 residues: Probable tRNA sulfurtransferase (404 aa).

Positions Glu-61–Glu-166 constitute a THUMP domain. Residues Leu-184–Leu-185, His-209–Phe-210, Arg-266, Gly-288, and Gln-297 contribute to the ATP site.

This sequence belongs to the ThiI family.

The protein localises to the cytoplasm. It catalyses the reaction [ThiI sulfur-carrier protein]-S-sulfanyl-L-cysteine + a uridine in tRNA + 2 reduced [2Fe-2S]-[ferredoxin] + ATP + H(+) = [ThiI sulfur-carrier protein]-L-cysteine + a 4-thiouridine in tRNA + 2 oxidized [2Fe-2S]-[ferredoxin] + AMP + diphosphate. It carries out the reaction [ThiS sulfur-carrier protein]-C-terminal Gly-Gly-AMP + S-sulfanyl-L-cysteinyl-[cysteine desulfurase] + AH2 = [ThiS sulfur-carrier protein]-C-terminal-Gly-aminoethanethioate + L-cysteinyl-[cysteine desulfurase] + A + AMP + 2 H(+). The protein operates within cofactor biosynthesis; thiamine diphosphate biosynthesis. In terms of biological role, catalyzes the ATP-dependent transfer of a sulfur to tRNA to produce 4-thiouridine in position 8 of tRNAs, which functions as a near-UV photosensor. Also catalyzes the transfer of sulfur to the sulfur carrier protein ThiS, forming ThiS-thiocarboxylate. This is a step in the synthesis of thiazole, in the thiamine biosynthesis pathway. The sulfur is donated as persulfide by IscS. In Bacillus cereus (strain AH820), this protein is Probable tRNA sulfurtransferase.